A 368-amino-acid polypeptide reads, in one-letter code: Glutaminyl-peptide cyclotransferase (368 aa).

Positions 1–33 (MARERRDSKAATFFCLAWALCLALPGFPQHVSG) are cleaved as a signal peptide. Asn53 is a glycosylation site (N-linked (GlcNAc...) asparagine). The cysteines at positions 143 and 169 are disulfide-linked. Residue Asp164 coordinates Zn(2+). The active-site Proton acceptor is Glu207. Zn(2+) is bound at residue Glu208. Catalysis depends on Asp254, which acts as the Proton acceptor. Residue Asn292 is glycosylated (N-linked (GlcNAc...) asparagine). His336 contributes to the Zn(2+) binding site. Asn352 is a glycosylation site (N-linked (GlcNAc...) asparagine).

It belongs to the glutaminyl-peptide cyclotransferase family. As to expression, expressed by the venom gland.

It localises to the secreted. The enzyme catalyses N-terminal L-glutaminyl-[peptide] = N-terminal 5-oxo-L-prolyl-[peptide] + NH4(+). In terms of biological role, responsible for the biosynthesis of pyroglutamyl peptides. Has a bias against acidic and tryptophan residues adjacent to the N-terminal glutaminyl residue and a lack of importance of chain length after the second residue. Also catalyzes N-terminal pyroglutamate formation. In Gloydius blomhoffii (Mamushi), this protein is Glutaminyl-peptide cyclotransferase (QPCT).